The primary structure comprises 78 residues: UPF0335 protein RP113 (78 aa).

It belongs to the UPF0335 family.

This Rickettsia prowazekii (strain Madrid E) protein is UPF0335 protein RP113.